The following is a 259-amino-acid chain: Thiazole synthase (259 aa).

The active-site Schiff-base intermediate with DXP is the K99. 1-deoxy-D-xylulose 5-phosphate is bound by residues G160, 186 to 187 (AG), and 208 to 209 (NT).

It belongs to the ThiG family. As to quaternary structure, homotetramer. Forms heterodimers with either ThiH or ThiS.

It is found in the cytoplasm. It catalyses the reaction [ThiS sulfur-carrier protein]-C-terminal-Gly-aminoethanethioate + 2-iminoacetate + 1-deoxy-D-xylulose 5-phosphate = [ThiS sulfur-carrier protein]-C-terminal Gly-Gly + 2-[(2R,5Z)-2-carboxy-4-methylthiazol-5(2H)-ylidene]ethyl phosphate + 2 H2O + H(+). It participates in cofactor biosynthesis; thiamine diphosphate biosynthesis. Functionally, catalyzes the rearrangement of 1-deoxy-D-xylulose 5-phosphate (DXP) to produce the thiazole phosphate moiety of thiamine. Sulfur is provided by the thiocarboxylate moiety of the carrier protein ThiS. In vitro, sulfur can be provided by H(2)S. The protein is Thiazole synthase of Porphyromonas gingivalis (strain ATCC 33277 / DSM 20709 / CIP 103683 / JCM 12257 / NCTC 11834 / 2561).